Consider the following 241-residue polypeptide: Proteasome subunit alpha (241 aa).

Belongs to the peptidase T1A family. As to quaternary structure, the 20S proteasome core is composed of 14 alpha and 14 beta subunits that assemble into four stacked heptameric rings, resulting in a barrel-shaped structure. The two inner rings, each composed of seven catalytic beta subunits, are sandwiched by two outer rings, each composed of seven alpha subunits. The catalytic chamber with the active sites is on the inside of the barrel. Has a gated structure, the ends of the cylinder being occluded by the N-termini of the alpha-subunits. Is capped by the proteasome-associated ATPase, ARC.

It localises to the cytoplasm. It functions in the pathway protein degradation; proteasomal Pup-dependent pathway. The formation of the proteasomal ATPase ARC-20S proteasome complex, likely via the docking of the C-termini of ARC into the intersubunit pockets in the alpha-rings, may trigger opening of the gate for substrate entry. Interconversion between the open-gate and close-gate conformations leads to a dynamic regulation of the 20S proteasome proteolysis activity. In terms of biological role, component of the proteasome core, a large protease complex with broad specificity involved in protein degradation. The protein is Proteasome subunit alpha of Parafrankia sp. (strain EAN1pec).